A 284-amino-acid polypeptide reads, in one-letter code: Pantothenate synthetase (284 aa).

Residue 30 to 37 (MGNLHEGH) coordinates ATP. The Proton donor role is filled by His37. Gln61 is a binding site for (R)-pantoate. Gln61 lines the beta-alanine pocket. 149-152 (GEKD) serves as a coordination point for ATP. Gln155 is a binding site for (R)-pantoate. ATP-binding positions include Val178 and 186–189 (LSSR).

It belongs to the pantothenate synthetase family. Homodimer.

It localises to the cytoplasm. The catalysed reaction is (R)-pantoate + beta-alanine + ATP = (R)-pantothenate + AMP + diphosphate + H(+). It participates in cofactor biosynthesis; (R)-pantothenate biosynthesis; (R)-pantothenate from (R)-pantoate and beta-alanine: step 1/1. Its function is as follows. Catalyzes the condensation of pantoate with beta-alanine in an ATP-dependent reaction via a pantoyl-adenylate intermediate. This Yersinia enterocolitica serotype O:8 / biotype 1B (strain NCTC 13174 / 8081) protein is Pantothenate synthetase.